A 447-amino-acid chain; its full sequence is ATP-dependent protease ATPase subunit HslU (447 aa).

ATP-binding positions include isoleucine 18, glycine 60–glutamate 65, aspartate 259, glutamate 325, and arginine 397.

This sequence belongs to the ClpX chaperone family. HslU subfamily. A double ring-shaped homohexamer of HslV is capped on each side by a ring-shaped HslU homohexamer. The assembly of the HslU/HslV complex is dependent on binding of ATP.

It localises to the cytoplasm. ATPase subunit of a proteasome-like degradation complex; this subunit has chaperone activity. The binding of ATP and its subsequent hydrolysis by HslU are essential for unfolding of protein substrates subsequently hydrolyzed by HslV. HslU recognizes the N-terminal part of its protein substrates and unfolds these before they are guided to HslV for hydrolysis. This chain is ATP-dependent protease ATPase subunit HslU, found in Burkholderia cenocepacia (strain ATCC BAA-245 / DSM 16553 / LMG 16656 / NCTC 13227 / J2315 / CF5610) (Burkholderia cepacia (strain J2315)).